Consider the following 916-residue polypeptide: MSRNSPLQSGQRGPPNGSPYPDSSQNNDTFLSRIFGLNSVYNHLQENYQYYDPEFDSTYNQQVLANSQRQDYDLFGNGLDKTNLLDSESDSDLSSSSSASPSVVVKPRFKRTEASDNEDDEVDDLLTSLSKPRSSPPRRKPTFNIPNARDIFSANGNTQATSVLPLYNQKYRKPVERDTGASAGDSRGYANSGIRRTNGTRFVIPPKERALYLWANITNMDEFLTDLYYYYRGKGMLNIVLSSIIDLLILVFILGFTVFLKWGINYRYFFDNYKDSTYITLADLIIPNFLVDEVPLLAKFFLFGFVCYIVLRLIQLYFNYNYKLKEIKNFYKYLINISNDDELMTITWKTIVERLMLLKDYNSLTSTTSHFDGATDHYINDLNSKVRLNAHDIANRIMRKENYMIALINKDVLDLSLSPFQNSSFQLINNKSVLTKTLEWNLKLCINNFAFNNEGQINPSILKDFNRNQLAKELNSRFKMAAIINLILCPFIVIYFVLLYFFRYFNEYKSNPASIMGLRQYTPYAEWKLREFNELPHFFIRRLQLSVGPANTYINMFPRGFLVINLMNLVNFISGAIMAILVIMGLWFEDENHSFWSFELTEGKSTLFYISIFGTLWAITSTSTSTSDTADNLNPNSHSFVYDPEASLRYVSQFTHYLPSSWNRRLHTVEVKNEFCELYSLKIIIILNEIFSLILTPFILWFRASSSSGAIIDFFREYSIHVDGLGYVCYFAMFNFEEKDKNMMFDLNKRKGKSKRSRRSKTSKTSSKKTVNEIELNNIKSKRREKAKISDSEDASSLPNTSDDESGNDLNADTYQDEKMIKSYMYFLESYGAGKADVRAINSNNKLLAKNSVISNIDPSPSLIIQGPSDNHSLLDSAYNINYKFDDAEQEESTRPGKKSGVLGMINQFYKQDLGR.

Polar residues predominate over residues 1 to 11; it reads MSRNSPLQSGQ. 2 disordered regions span residues 1–27 and 86–150; these read MSRN…SQNN and DSES…NARD. The Cytoplasmic segment spans residues 1–238; the sequence is MSRNSPLQSG…YYYRGKGMLN (238 aa). The segment covering 92 to 105 has biased composition (low complexity); it reads DLSSSSSASPSVVV. Positions 115-124 are enriched in acidic residues; that stretch reads SDNEDDEVDD. Residues 239-259 form a helical membrane-spanning segment; the sequence is IVLSSIIDLLILVFILGFTVF. Residues 260–293 are Lumenal-facing; it reads LKWGINYRYFFDNYKDSTYITLADLIIPNFLVDE. Residues 294–314 form a helical membrane-spanning segment; it reads VPLLAKFFLFGFVCYIVLRLI. At 315 to 481 the chain is on the cytoplasmic side; that stretch reads QLYFNYNYKL…KELNSRFKMA (167 aa). Residues 482–502 lie within the membrane without spanning it; that stretch reads AIINLILCPFIVIYFVLLYFF. Topologically, residues 503–568 are cytoplasmic; sequence RYFNEYKSNP…RGFLVINLMN (66 aa). Residues 569–589 traverse the membrane as a helical segment; it reads LVNFISGAIMAILVIMGLWFE. The Lumenal segment spans residues 590–605; the sequence is DENHSFWSFELTEGKS. A helical transmembrane segment spans residues 606-626; that stretch reads TLFYISIFGTLWAITSTSTST. Topologically, residues 627-681 are cytoplasmic; it reads SDTADNLNPNSHSFVYDPEASLRYVSQFTHYLPSSWNRRLHTVEVKNEFCELYSL. An intramembrane segment occupies 682–702; sequence KIIIILNEIFSLILTPFILWF. The Cytoplasmic portion of the chain corresponds to 703-916; sequence RASSSSGAII…NQFYKQDLGR (214 aa). Residues 747–814 form a disordered region; it reads LNKRKGKSKR…ESGNDLNADT (68 aa). A compositionally biased stretch (basic residues) spans 750–762; that stretch reads RKGKSKRSRRSKT.

This sequence belongs to the ATG9 family. In terms of assembly, homotrimer; forms a homotrimer with a central pore that forms a path between the two membrane leaflets. Phosphorylated by ATG1. ATG1 phosphorylation is required for preautophagosome elongation.

It localises to the preautophagosomal structure membrane. Its subcellular location is the cytoplasmic vesicle membrane. The protein resides in the golgi apparatus membrane. The protein localises to the endoplasmic reticulum membrane. The catalysed reaction is a 1,2-diacyl-sn-glycero-3-phosphocholine(in) = a 1,2-diacyl-sn-glycero-3-phosphocholine(out). It carries out the reaction a 1,2-diacyl-sn-glycero-3-phospho-L-serine(in) = a 1,2-diacyl-sn-glycero-3-phospho-L-serine(out). The enzyme catalyses a 1,2-diacyl-sn-glycero-3-phosphoethanolamine(in) = a 1,2-diacyl-sn-glycero-3-phosphoethanolamine(out). It catalyses the reaction a 1,2-diacyl-sn-glycero-3-phospho-(1D-myo-inositol-3-phosphate)(in) = a 1,2-diacyl-sn-glycero-3-phospho-(1D-myo-inositol-3-phosphate)(out). In terms of biological role, phospholipid scramblase involved in autophagy and cytoplasm to vacuole transport (Cvt) vesicle formation. Cycles between the preautophagosomal structure/phagophore assembly site (PAS) and the cytoplasmic vesicle pool and supplies membrane for the growing autophagosome. Lipid scramblase activity plays a key role in preautophagosomal structure/phagophore assembly by distributing the phospholipids that arrive through ATG2 from the cytoplasmic to the luminal leaflet of the bilayer, thereby driving autophagosomal membrane expansion. Required for mitophagy. Also involved in endoplasmic reticulum-specific autophagic process and is essential for the survival of cells subjected to severe ER stress. Different machineries are required for anterograde trafficking to the PAS during either the Cvt pathway or bulk autophagy and for retrograde trafficking. The chain is Autophagy-related protein 9 (ATG9) from Scheffersomyces stipitis (strain ATCC 58785 / CBS 6054 / NBRC 10063 / NRRL Y-11545) (Yeast).